The primary structure comprises 223 residues: UPF0441 protein ETA_04310 (223 aa).

Residues 166–223 (YGAATPGRTMTVPKSALAPKPATTSTVTRGGFGESVAKQNTMQRNSSSTGSANRSMGG) form a disordered region. Residues 202–223 (AKQNTMQRNSSSTGSANRSMGG) show a composition bias toward polar residues.

It belongs to the UPF0441 family.

This Erwinia tasmaniensis (strain DSM 17950 / CFBP 7177 / CIP 109463 / NCPPB 4357 / Et1/99) protein is UPF0441 protein ETA_04310.